Here is a 444-residue protein sequence, read N- to C-terminus: Interferon-induced protein 44 (444 aa).

Residues 1-152 form the TLDc domain; the sequence is MAVTTRLTWL…IQDYEVFRCE (152 aa).

It belongs to the IFI44 family.

It localises to the cytoplasm. Functionally, this protein aggregates to form microtubular structures. This Homo sapiens (Human) protein is Interferon-induced protein 44 (IFI44).